A 264-amino-acid chain; its full sequence is 3-methyl-2-oxobutanoate hydroxymethyltransferase (264 aa).

D41 and D80 together coordinate Mg(2+). Residues D41 to S42, D80, and K109 each bind 3-methyl-2-oxobutanoate. E111 contacts Mg(2+). The Proton acceptor role is filled by E178.

The protein belongs to the PanB family. Homodecamer; pentamer of dimers. Mg(2+) serves as cofactor.

The protein localises to the cytoplasm. It carries out the reaction 3-methyl-2-oxobutanoate + (6R)-5,10-methylene-5,6,7,8-tetrahydrofolate + H2O = 2-dehydropantoate + (6S)-5,6,7,8-tetrahydrofolate. It functions in the pathway cofactor biosynthesis; (R)-pantothenate biosynthesis; (R)-pantoate from 3-methyl-2-oxobutanoate: step 1/2. Its function is as follows. Catalyzes the reversible reaction in which hydroxymethyl group from 5,10-methylenetetrahydrofolate is transferred onto alpha-ketoisovalerate to form ketopantoate. In Thermosipho melanesiensis (strain DSM 12029 / CIP 104789 / BI429), this protein is 3-methyl-2-oxobutanoate hydroxymethyltransferase.